The chain runs to 309 residues: NAD kinase (309 aa).

D89 (proton acceptor) is an active-site residue. Residues 89 to 90, 163 to 164, H174, R191, D193, and 204 to 209 each bind NAD(+); these read DG, NE, and TAYSLS.

Belongs to the NAD kinase family. It depends on a divalent metal cation as a cofactor.

It localises to the cytoplasm. The catalysed reaction is NAD(+) + ATP = ADP + NADP(+) + H(+). Involved in the regulation of the intracellular balance of NAD and NADP, and is a key enzyme in the biosynthesis of NADP. Catalyzes specifically the phosphorylation on 2'-hydroxyl of the adenosine moiety of NAD to yield NADP. This chain is NAD kinase, found in Shewanella frigidimarina (strain NCIMB 400).